We begin with the raw amino-acid sequence, 172 residues long: uncharacterized protein (172 aa).

It belongs to the flavoredoxin family. It depends on FMN as a cofactor.

This is an uncharacterized protein from Pyrococcus horikoshii (strain ATCC 700860 / DSM 12428 / JCM 9974 / NBRC 100139 / OT-3).